Consider the following 991-residue polypeptide: Translation initiation factor IF-2 (991 aa).

3 disordered regions span residues serine 53–threonine 85, valine 97–glutamate 175, and glycine 312–glycine 395. Basic and acidic residues-rich tracts occupy residues valine 97–glutamine 113 and glutamate 125–glutamate 175. Over residues alanine 323 to lysine 338 the composition is skewed to low complexity. Basic and acidic residues predominate over residues proline 339–lysine 349. One can recognise a tr-type G domain in the interval proline 491–glutamate 658. Positions glycine 500–threonine 507 are G1. Residue glycine 500–threonine 507 participates in GTP binding. Positions glycine 525–histidine 529 are G2. Positions aspartate 546–glycine 549 are G3. GTP contacts are provided by residues aspartate 546–histidine 550 and asparagine 600–aspartate 603. The segment at asparagine 600–aspartate 603 is G4. The G5 stretch occupies residues serine 636 to lysine 638.

This sequence belongs to the TRAFAC class translation factor GTPase superfamily. Classic translation factor GTPase family. IF-2 subfamily.

Its subcellular location is the cytoplasm. Its function is as follows. One of the essential components for the initiation of protein synthesis. Protects formylmethionyl-tRNA from spontaneous hydrolysis and promotes its binding to the 30S ribosomal subunits. Also involved in the hydrolysis of GTP during the formation of the 70S ribosomal complex. This Leptothrix cholodnii (strain ATCC 51168 / LMG 8142 / SP-6) (Leptothrix discophora (strain SP-6)) protein is Translation initiation factor IF-2.